Consider the following 268-residue polypeptide: Phosphatidylglycerol--prolipoprotein diacylglyceryl transferase (268 aa).

7 helical membrane-spanning segments follow: residues 23-43 (IGLR…RWLA), 62-82 (LLFN…VFFY), 97-117 (VWEG…AMIW), 132-152 (FVAP…FINL), 179-199 (SQLY…NIFI), 206-226 (ASVA…VEYV), and 241-261 (GQAL…WAYS). R145 serves as a coordination point for a 1,2-diacyl-sn-glycero-3-phospho-(1'-sn-glycerol).

The protein belongs to the Lgt family.

The protein localises to the cell inner membrane. The catalysed reaction is L-cysteinyl-[prolipoprotein] + a 1,2-diacyl-sn-glycero-3-phospho-(1'-sn-glycerol) = an S-1,2-diacyl-sn-glyceryl-L-cysteinyl-[prolipoprotein] + sn-glycerol 1-phosphate + H(+). It participates in protein modification; lipoprotein biosynthesis (diacylglyceryl transfer). In terms of biological role, catalyzes the transfer of the diacylglyceryl group from phosphatidylglycerol to the sulfhydryl group of the N-terminal cysteine of a prolipoprotein, the first step in the formation of mature lipoproteins. The protein is Phosphatidylglycerol--prolipoprotein diacylglyceryl transferase of Haemophilus influenzae (strain 86-028NP).